A 4116-amino-acid chain; its full sequence is Dynein axonemal heavy chain 3 (4116 aa).

Disordered regions lie at residues 1-68 (MGAT…ANEE) and 137-172 (VPRD…KEDS). The segment at 1–1390 (MGATGRLELT…QVQIITTEAL (1390 aa)) is stem. Residues 145-156 (GLPSSGNRSSSE) are compositionally biased toward polar residues. A coiled-coil region spans residues 785–852 (DLIKRCSEFE…NKEEELLEKE (68 aa)). 4 AAA regions span residues 1391-1612 (YGYE…VLTA), 1672-1903 (KVLN…LHCK), 2036-2284 (KVPA…VIQG), and 2395-2646 (EFNN…LRRH). Residues 1429–1436 (GPAGTGKT), 1710–1717 (GDPMGGKT), 2074–2081 (GPTGTGKS), and 2434–2441 (GIGGSGRQ) each bind ATP. The stalk stretch occupies residues 2661-2960 (FKTLLNSKRQ…KDLEENIEIC (300 aa)). AAA regions lie at residues 3045-3275 (LGDP…EISE) and 3488-3712 (VREF…QIQM).

It belongs to the dynein heavy chain family. In terms of assembly, consists of at least two heavy chains and a number of intermediate and light chains. As to expression, expressed primarily in trachea and testis, 2 tissues containing axonemal structures. Also expressed in lung.

The protein localises to the cytoplasm. It is found in the cytoskeleton. Its subcellular location is the cilium axoneme. Its function is as follows. Force generating protein of respiratory cilia. Produces force towards the minus ends of microtubules. Dynein has ATPase activity; the force-producing power stroke is thought to occur on release of ADP. Involved in sperm motility; implicated in sperm flagellar assembly. The polypeptide is Dynein axonemal heavy chain 3 (DNAH3) (Homo sapiens (Human)).